We begin with the raw amino-acid sequence, 269 residues long: Cyclic AMP-dependent transcription factor ATF-1 (269 aa).

Residues Met-1–Ala-90 are disordered. Positions Thr-9–Ser-18 are enriched in polar residues. The KID domain occupies Gln-31–Ala-90. Ser-63 is modified (phosphoserine; by CaMK1, CDK3, RPS6KA4 and RPS6KA5). Over residues Ile-67–Gly-83 the composition is skewed to basic and acidic residues. The residue at position 196 (Ser-196) is a Phosphoserine; by HIPK2. Lys-206 is covalently cross-linked (Glycyl lysine isopeptide (Lys-Gly) (interchain with G-Cter in SUMO2)). A bZIP domain is found at Gln-211–Val-269. The basic motif stretch occupies residues Arg-213–Lys-237. Positions Leu-239–Leu-260 are leucine-zipper.

It belongs to the bZIP family. ATF subfamily. As to quaternary structure, binds DNA as a dimer. Interacts with HIPK2 and CDK3. Interacts with MOTS-c, a peptide produced by the mitochondrially encoded 12S rRNA MT-RNR1; the interaction occurs in the nucleus following metabolic stress. Post-translationally, phosphorylated at Ser-196 by HIPK2 in response to genotoxic stress. This phosphorylation promotes transcription repression of FTH1 and other antioxidant detoxification genes. The CDK3-mediated phosphorylation at Ser-63 promotes its transactivation and transcriptional activities. Phosphorylated at Ser-63 by RPS6KA4 and RPS6KA5 in response to mitogenic or stress stimuli.

The protein localises to the nucleus. Functionally, binds the cAMP response element (CRE) (consensus: 5'-GTGACGT[AC][AG]-3'), a sequence present in many viral and cellular promoters. Binds to the Tax-responsive element (TRE) of HTLV-I. Mediates PKA-induced stimulation of CRE-reporter genes. Represses the expression of FTH1 and other antioxidant detoxification genes. Triggers cell proliferation and transformation. The polypeptide is Cyclic AMP-dependent transcription factor ATF-1 (Atf1) (Mus musculus (Mouse)).